A 476-amino-acid polypeptide reads, in one-letter code: Glutamate--tRNA ligase (476 aa).

Residues 9-19 carry the 'HIGH' region motif; that stretch reads PSPTGTLHIGT. The 'KMSKS' region motif lies at 248 to 252; the sequence is KLSKR. Residue lysine 251 coordinates ATP.

This sequence belongs to the class-I aminoacyl-tRNA synthetase family. Glutamate--tRNA ligase type 1 subfamily. In terms of assembly, monomer.

The protein localises to the cytoplasm. It carries out the reaction tRNA(Glu) + L-glutamate + ATP = L-glutamyl-tRNA(Glu) + AMP + diphosphate. Catalyzes the attachment of glutamate to tRNA(Glu) in a two-step reaction: glutamate is first activated by ATP to form Glu-AMP and then transferred to the acceptor end of tRNA(Glu). The chain is Glutamate--tRNA ligase from Prochlorococcus marinus (strain MIT 9313).